The chain runs to 421 residues: Synaptotagmin-15 (421 aa).

The Extracellular portion of the chain corresponds to 1-4; that stretch reads MAEQ. The helical; Signal-anchor for type III membrane protein transmembrane segment at 5–29 threads the bilayer; that stretch reads LALVIGGTIGGLLLLLLIGASCCLW. The Cytoplasmic portion of the chain corresponds to 30 to 421; that stretch reads RRFCATLTYE…WHALCRTTEP (392 aa). The interval 47–68 is disordered; sequence MATTAASSGQRDRPCQPHARTQ. C2 domains follow at residues 147-264 and 278-399; these read CLGR…RRVI and EFGD…EHWD.

This sequence belongs to the synaptotagmin family. Homodimer.

The protein localises to the cell membrane. Its function is as follows. May be involved in the trafficking and exocytosis of secretory vesicles in non-neuronal tissues. The sequence is that of Synaptotagmin-15 (SYT15) from Homo sapiens (Human).